A 201-amino-acid polypeptide reads, in one-letter code: UPF0301 protein R00917 (201 aa).

This sequence belongs to the UPF0301 (AlgH) family.

This Rhizobium meliloti (strain 1021) (Ensifer meliloti) protein is UPF0301 protein R00917.